We begin with the raw amino-acid sequence, 114 residues long: U-myrmeciitoxin(01)-Mg8a (114 aa).

Positions 1 to 20 (MKLSTLLVAFVLLVITVILS) are cleaved as a signal peptide. A propeptide spanning residues 21 to 44 (TPSTNAKALAESNALAVAVSEAEP) is cleaved from the precursor.

The protein belongs to the formicidae venom precursor-01 superfamily. In terms of tissue distribution, expressed by the venom gland.

It is found in the secreted. In terms of biological role, may have antimicrobial properties, like most ant linear peptides. This Myrmecia gulosa (Red bulldog ant) protein is U-myrmeciitoxin(01)-Mg8a.